We begin with the raw amino-acid sequence, 359 residues long: tRNA N6-adenosine threonylcarbamoyltransferase (359 aa).

Fe cation contacts are provided by His-115 and His-119. Residues Leu-137 to Gly-141, Asp-170, Gly-183, and Asn-283 each bind substrate. Residue Asp-311 participates in Fe cation binding. The disordered stretch occupies residues Ala-328–Ala-359.

Belongs to the KAE1 / TsaD family. Fe(2+) serves as cofactor.

The protein resides in the cytoplasm. The catalysed reaction is L-threonylcarbamoyladenylate + adenosine(37) in tRNA = N(6)-L-threonylcarbamoyladenosine(37) in tRNA + AMP + H(+). Its function is as follows. Required for the formation of a threonylcarbamoyl group on adenosine at position 37 (t(6)A37) in tRNAs that read codons beginning with adenine. Is involved in the transfer of the threonylcarbamoyl moiety of threonylcarbamoyl-AMP (TC-AMP) to the N6 group of A37, together with TsaE and TsaB. TsaD likely plays a direct catalytic role in this reaction. This Brucella ovis (strain ATCC 25840 / 63/290 / NCTC 10512) protein is tRNA N6-adenosine threonylcarbamoyltransferase.